The following is a 256-amino-acid chain: NAD-dependent protein deacylase 2 (256 aa).

One can recognise a Deacetylase sirtuin-type domain in the interval 1–256 (MDSHSPIATV…MPQVVSHIYR (256 aa)). Residues 25–44 (GAGL…GGLY) and 108–111 (QNID) contribute to the NAD(+) site. Residue His128 is the Proton acceptor of the active site. Zn(2+) contacts are provided by Cys136, Cys139, Cys158, and Cys161. Residues 199 to 201 (GTT), 225 to 227 (NPG), and Ala243 each bind NAD(+).

This sequence belongs to the sirtuin family. Class III subfamily. The cofactor is Zn(2+).

Its subcellular location is the cytoplasm. The catalysed reaction is N(6)-acetyl-L-lysyl-[protein] + NAD(+) + H2O = 2''-O-acetyl-ADP-D-ribose + nicotinamide + L-lysyl-[protein]. In terms of biological role, NAD-dependent protein deacetylase which modulates the activities of several proteins which are inactive in their acetylated form. The polypeptide is NAD-dependent protein deacylase 2 (cobB2) (Pseudomonas aeruginosa (strain ATCC 15692 / DSM 22644 / CIP 104116 / JCM 14847 / LMG 12228 / 1C / PRS 101 / PAO1)).